A 285-amino-acid polypeptide reads, in one-letter code: RNase adapter protein RapZ (285 aa).

8–15 (GRSGSGKS) provides a ligand contact to ATP. A GTP-binding site is contributed by 56-59 (DVRN). The RNA-binding stretch occupies residues 266–285 (RSRGKNVQSRHRTLEKRKPS).

It belongs to the RapZ-like family. RapZ subfamily. In terms of assembly, homotrimer.

In terms of biological role, modulates the synthesis of GlmS, by affecting the processing and stability of the regulatory small RNA GlmZ. When glucosamine-6-phosphate (GlcN6P) concentrations are high in the cell, RapZ binds GlmZ and targets it to cleavage by RNase E. Consequently, GlmZ is inactivated and unable to activate GlmS synthesis. Under low GlcN6P concentrations, RapZ is sequestered and inactivated by an other regulatory small RNA, GlmY, preventing GlmZ degradation and leading to synthesis of GlmS. The polypeptide is RNase adapter protein RapZ (Pectobacterium atrosepticum (strain SCRI 1043 / ATCC BAA-672) (Erwinia carotovora subsp. atroseptica)).